The primary structure comprises 488 residues: Malonate-semialdehyde dehydrogenase (488 aa).

NAD(+) is bound by residues alanine 150, phenylalanine 152, lysine 176, glutamate 179, arginine 180, serine 229, and threonine 251. Residue cysteine 284 is the Nucleophile of the active site. Glutamate 382 provides a ligand contact to NAD(+).

This sequence belongs to the aldehyde dehydrogenase family. IolA subfamily. In terms of assembly, homotetramer.

The enzyme catalyses 3-oxopropanoate + NAD(+) + CoA + H2O = hydrogencarbonate + acetyl-CoA + NADH + H(+). It catalyses the reaction 2-methyl-3-oxopropanoate + NAD(+) + CoA + H2O = propanoyl-CoA + hydrogencarbonate + NADH + H(+). It participates in polyol metabolism; myo-inositol degradation into acetyl-CoA; acetyl-CoA from myo-inositol: step 7/7. In terms of biological role, catalyzes the oxidation of malonate semialdehyde (MSA) and methylmalonate semialdehyde (MMSA) into acetyl-CoA and propanoyl-CoA, respectively. Is involved in a myo-inositol catabolic pathway. Bicarbonate, and not CO2, is the end-product of the enzymatic reaction. This is Malonate-semialdehyde dehydrogenase from Listeria innocua serovar 6a (strain ATCC BAA-680 / CLIP 11262).